The following is a 290-amino-acid chain: Arylamine N-acetyltransferase 1 (290 aa).

The residue at position 1 (Met1) is an N-acetylmethionine. The Acyl-thioester intermediate role is filled by Cys68. Ser103 is a CoA binding site. 106 to 107 contributes to the substrate binding site; it reads VH. Catalysis depends on residues His107 and Asp122. Tyr208 provides a ligand contact to CoA.

It belongs to the arylamine N-acetyltransferase family.

It is found in the cytoplasm. It catalyses the reaction an arylamine + acetyl-CoA = an N-acetylarylamine + CoA. In terms of biological role, participates in the detoxification of a plethora of hydrazine and arylamine drugs. Acetylates both arylamines and arylalkylamines. This is Arylamine N-acetyltransferase 1 (Nat1) from Rattus norvegicus (Rat).